A 319-amino-acid chain; its full sequence is Putrescine hydroxycinnamoyltransferase 2 (319 aa).

Active-site proton acceptor residues include H160 and D301.

This sequence belongs to the plant acyltransferase family.

Hydroxycinnamoyl transferase that catalyzes the transfer of an acyl from p-coumaryol-CoA to putrescine, to produce coumaroyl putrescine. The protein is Putrescine hydroxycinnamoyltransferase 2 of Oryza sativa subsp. japonica (Rice).